Here is a 107-residue protein sequence, read N- to C-terminus: Nucleoid-associated protein YaaK (107 aa).

The interval 1–24 (MRGGMGNMQKMMKQMQKMQKDMAK) is disordered. Over residues 8-17 (MQKMMKQMQK) the composition is skewed to low complexity.

Belongs to the YbaB/EbfC family. In terms of assembly, homodimer.

The protein localises to the cytoplasm. It is found in the nucleoid. In terms of biological role, binds to DNA and alters its conformation. May be involved in regulation of gene expression, nucleoid organization and DNA protection. The protein is Nucleoid-associated protein YaaK (yaaK) of Bacillus subtilis (strain 168).